The following is a 326-amino-acid chain: Probable iron chelatin transport system permease protein jhp_0822 (326 aa).

The next 10 membrane-spanning stretches (helical) occupy residues I7–S27, I64–L84, P91–V111, S113–M133, L142–I162, F164–L184, Y187–L207, V241–P261, L275–K295, and D301–F321.

Belongs to the binding-protein-dependent transport system permease family. FecCD subfamily.

Its subcellular location is the cell inner membrane. Part of a binding-protein-dependent transport system for an iron chelatin; probably responsible for the translocation of the substrate across the membrane. The polypeptide is Probable iron chelatin transport system permease protein jhp_0822 (Helicobacter pylori (strain J99 / ATCC 700824) (Campylobacter pylori J99)).